The primary structure comprises 364 residues: Protein trichome birefringence-like 40 (364 aa).

A helical; Signal-anchor for type II membrane protein transmembrane segment spans residues 9 to 25 (LASLSLILFSSFPGLLA). A GDS motif motif is present at residues 118-120 (GDS). Residues 341-355 (DCSHWCLPGLPDTWN) carry the DCXHWCLPGXXDXWN motif motif.

It belongs to the PC-esterase family. TBL subfamily.

Its subcellular location is the membrane. Its function is as follows. May act as a bridging protein that binds pectin and other cell wall polysaccharides. Probably involved in maintaining esterification of pectins. May be involved in the specific O-acetylation of cell wall polymers. The protein is Protein trichome birefringence-like 40 (TBL40) of Arabidopsis thaliana (Mouse-ear cress).